The sequence spans 413 residues: Chloramphenicol efflux pump Rv0191 (413 aa).

The next 12 membrane-spanning stretches (helical) occupy residues 23–43 (LSVL…PVGA), 55–75 (VVLV…TTVP), 89–109 (LVVS…APNF), 110–130 (AVLA…WAVI), 150–170 (IYIG…AMSL), 176–196 (LAAV…RLAL), 226–246 (VLTM…VVII), 256–276 (NLAW…PLVA), 286–306 (AVIV…ALAF), 312–332 (AATA…ATAV), 353–373 (GLYV…GGLL), and 378–398 (LAMM…GMTV).

It belongs to the major facilitator superfamily.

The protein localises to the cell membrane. Inhibited by the drug efflux pump inhibitors verapamil, resperine, piperine, chlorpromazine and carbonyl cyanide m-chlorophenylhydrazone (CCCP). In terms of biological role, active efflux pump that plays an important role in chloramphenicol resistance. Overexpression causes pyrazinamide resistance. The sequence is that of Chloramphenicol efflux pump Rv0191 from Mycobacterium tuberculosis (strain ATCC 25618 / H37Rv).